Consider the following 150-residue polypeptide: Non-structural protein (150 aa).

Residues 93–140 form an apoptotic activity region; that stretch reads PLFRIRFLLLIMSDSISLTDITISPGTLYSARTLLLRAAVLALTRKPM.

Disrupts the host mitochondrial membrane potential and induces apoptosis probably by inducing host CASP8 and CASP9. In Bos taurus (Bovine), this protein is Non-structural protein.